Here is a 408-residue protein sequence, read N- to C-terminus: Tripartite motif-containing protein 59 (408 aa).

An RING-type zinc finger spans residues 10–60 (CSICYSLFEDPRVLPCSHTFCRSCLEGVIQLSSNFSIWRPLRVPLKCPNCR). A B box-type zinc finger spans residues 92–134 (SDVATCSEHYRQPLNVYCLLDKKLVCGHCLTIGKHNGHPIDDL). Positions 97, 100, 120, and 126 each coordinate Zn(2+). Residues 163–247 (LIEKLKEQKA…LNTSIQKEES (85 aa)) adopt a coiled-coil conformation. A helical transmembrane segment spans residues 333-353 (ANPLSVTFIFTVIIAIAVLSF).

Belongs to the TRIM/RBCC family. Interacts with ECSIT.

It is found in the endoplasmic reticulum membrane. In terms of biological role, may serve as a multifunctional regulator for innate immune signaling pathways. This Gallus gallus (Chicken) protein is Tripartite motif-containing protein 59 (TRIM59).